The primary structure comprises 98 residues: Protein FAM24A (98 aa).

A signal peptide spans 1–29; the sequence is MFDLRTKVMIGIASTLLIAAIVLITVVFC.

Belongs to the FAM24 family.

Its subcellular location is the secreted. The polypeptide is Protein FAM24A (Fam24a) (Rattus norvegicus (Rat)).